Reading from the N-terminus, the 446-residue chain is Neuropeptide Y receptor type 5 (446 aa).

Residues Met1–Tyr42 lie on the Extracellular side of the membrane. Residues Asn10 and Asn17 are each glycosylated (N-linked (GlcNAc...) asparagine). A helical transmembrane segment spans residues Phe43 to Leu63. At Met64–Asn77 the chain is on the cytoplasmic side. A helical membrane pass occupies residues Phe78 to Thr98. Residues Leu99–Met117 lie on the Extracellular side of the membrane. Cys114 and Cys198 are oxidised to a cystine. A helical transmembrane segment spans residues Pro118–Val138. Residues Arg139 to Gly156 lie on the Cytoplasmic side of the membrane. A helical membrane pass occupies residues Tyr157–Phe177. Topologically, residues His178–Arg208 are extracellular. A helical membrane pass occupies residues Ile209 to Val229. The Cytoplasmic portion of the chain corresponds to Ser230–Arg369. Residues Leu370–Val390 traverse the membrane as a helical segment. Topologically, residues Thr391–Tyr407 are extracellular. A helical membrane pass occupies residues Cys408–Leu428. At Asn429 to Ser446 the chain is on the cytoplasmic side. Cys442 is lipidated: S-palmitoyl cysteine.

This sequence belongs to the G-protein coupled receptor 1 family.

It localises to the cell membrane. Its function is as follows. Receptor for neuropeptide Y and peptide YY. The activity of this receptor is mediated by G proteins that inhibit adenylate cyclase activity. Seems to be associated with food intake. Could be involved in feeding disorders. This chain is Neuropeptide Y receptor type 5 (NPY5R), found in Canis lupus familiaris (Dog).